Reading from the N-terminus, the 146-residue chain is Hemoglobin subunit beta (146 aa).

At Val1 the chain carries N-acetylvaline. The region spanning 2-146 is the Globin domain; that stretch reads ELTAEEKAAV…VANALAHKYH (145 aa). Ser44 is subject to Phosphoserine. Lys59 carries the post-translational modification N6-acetyllysine. His63 is a heme b binding site. Lys82 is subject to N6-acetyllysine. His92 contributes to the heme b binding site. The residue at position 93 (Cys93) is an S-nitrosocysteine. The residue at position 144 (Lys144) is an N6-acetyllysine.

It belongs to the globin family. In terms of assembly, heterotetramer of two alpha chains and two beta chains. Red blood cells.

Functionally, involved in oxygen transport from the lung to the various peripheral tissues. The chain is Hemoglobin subunit beta (HBB) from Ceratotherium simum (White rhinoceros).